Consider the following 397-residue polypeptide: Phosphoglycerate kinase (397 aa).

Substrate is bound by residues 21–23, Arg-37, 60–63, Arg-119, and Arg-152; these read DFN and HLGR. ATP contacts are provided by residues Lys-203, Gly-294, Glu-325, and 354–357; that span reads GGDS.

Belongs to the phosphoglycerate kinase family. As to quaternary structure, monomer.

It localises to the cytoplasm. The enzyme catalyses (2R)-3-phosphoglycerate + ATP = (2R)-3-phospho-glyceroyl phosphate + ADP. It participates in carbohydrate degradation; glycolysis; pyruvate from D-glyceraldehyde 3-phosphate: step 2/5. The sequence is that of Phosphoglycerate kinase from Chlorobaculum tepidum (strain ATCC 49652 / DSM 12025 / NBRC 103806 / TLS) (Chlorobium tepidum).